The sequence spans 117 residues: Large ribosomal subunit protein bL17 (117 aa).

It belongs to the bacterial ribosomal protein bL17 family. In terms of assembly, part of the 50S ribosomal subunit. Contacts protein L32.

In Coprothermobacter proteolyticus (strain ATCC 35245 / DSM 5265 / OCM 4 / BT), this protein is Large ribosomal subunit protein bL17.